We begin with the raw amino-acid sequence, 209 residues long: Uracil phosphoribosyltransferase (209 aa).

5-phospho-alpha-D-ribose 1-diphosphate is bound by residues R79, R104, and D131–S139. Uracil contacts are provided by residues I194 and G199–A201. Residue D200 participates in 5-phospho-alpha-D-ribose 1-diphosphate binding.

This sequence belongs to the UPRTase family. It depends on Mg(2+) as a cofactor.

The enzyme catalyses UMP + diphosphate = 5-phospho-alpha-D-ribose 1-diphosphate + uracil. It participates in pyrimidine metabolism; UMP biosynthesis via salvage pathway; UMP from uracil: step 1/1. Its activity is regulated as follows. Allosterically activated by GTP. In terms of biological role, catalyzes the conversion of uracil and 5-phospho-alpha-D-ribose 1-diphosphate (PRPP) to UMP and diphosphate. The sequence is that of Uracil phosphoribosyltransferase from Rhizobium etli (strain CIAT 652).